Here is a 663-residue protein sequence, read N- to C-terminus: Inner nuclear membrane protein HEH2 (663 aa).

Disordered regions lie at residues 46–188 (QRLQ…ELPN) and 267–289 (ISET…KNIR). A compositionally biased stretch (polar residues) spans 47-62 (RLQSSPEASKVRTSIQ). The span at 91-123 (KTVKDENVETNKRKREQISTDNEAKMQIQEEKS) shows a compositional bias: basic and acidic residues. Residue S123 is modified to Phosphoserine. The span at 124 to 134 (PKKKRKKRSSK) shows a compositional bias: basic residues. The short motif at 124-137 (PKKKRKKRSSKANK) is the Nuclear localization signal element. Positions 164 to 183 (EELHKKDSSDDKPRVKELPK) are enriched in basic and acidic residues. The helical transmembrane segment at 317 to 337 (LFIWLWNGAIFLSIICPILFG) threads the bilayer.

As to quaternary structure, interacts with SRP1.

Its subcellular location is the nucleus inner membrane. This Saccharomyces cerevisiae (strain ATCC 204508 / S288c) (Baker's yeast) protein is Inner nuclear membrane protein HEH2 (HEH2).